A 394-amino-acid polypeptide reads, in one-letter code: Putative pectate lyase 17 (394 aa).

Residues 1 to 22 (MTHFTVSCLLVALFLCQSLVHA) form the signal peptide. 3 residues coordinate Ca(2+): aspartate 192, aspartate 216, and aspartate 220. Residue arginine 272 is part of the active site.

This sequence belongs to the polysaccharide lyase 1 family. Ca(2+) serves as cofactor.

It carries out the reaction Eliminative cleavage of (1-&gt;4)-alpha-D-galacturonan to give oligosaccharides with 4-deoxy-alpha-D-galact-4-enuronosyl groups at their non-reducing ends.. The protein operates within glycan metabolism; pectin degradation; 2-dehydro-3-deoxy-D-gluconate from pectin: step 2/5. This chain is Putative pectate lyase 17, found in Arabidopsis thaliana (Mouse-ear cress).